The primary structure comprises 176 residues: Japanin (176 aa).

A signal peptide spans 1-24 (MKVLRCLVCSFYIIVSLITTMTIG). Residue Glu47 coordinates cholesterol. 2 disulfide bridges follow: Cys52-Cys174 and Cys138-Cys162. N-linked (GlcNAc...) asparagine glycans are attached at residues Asn59 and Asn155.

Belongs to the calycin superfamily. Lipocalin family. In terms of assembly, homodimer; non-disulfide-linked. Each monomer accommodates one molecule of cholesterol in a pocket. Expressed in salivary glands.

Its subcellular location is the secreted. In terms of biological role, salivary tick protein that modulates host immune response. This protein blocks dendritic cell (DC) differentiation from monocytes. In addition, it inhibits up-regulation of costimulatory molecules and pro-inflammatory cytokines in response to stimuli and promotes up-regulation of co-inhibitory molecules and the anti-inflammatory cytokine interleukin-10. It has a pocket to accomodate cholesterol, which may have immune-modulatory roles, either directly or through interactions with the host gut microbiota. This chain is Japanin, found in Rhipicephalus appendiculatus (Brown ear tick).